The following is a 276-amino-acid chain: UPF0328 protein ECU08_2080 (276 aa).

The tract at residues Met1–His24 is disordered.

Belongs to the UPF0328 family.

The polypeptide is UPF0328 protein ECU08_2080 (Encephalitozoon cuniculi (strain GB-M1) (Microsporidian parasite)).